The chain runs to 174 residues: Protein GrpE (174 aa).

The tract at residues 1–35 is disordered; that stretch reads MAQDIKNEEVEEVQEEEVVKTAEETTPEKSELDLA. Residues 17–35 are compositionally biased toward basic and acidic residues; that stretch reads EVVKTAEETTPEKSELDLA.

This sequence belongs to the GrpE family. As to quaternary structure, homodimer.

The protein resides in the cytoplasm. Participates actively in the response to hyperosmotic and heat shock by preventing the aggregation of stress-denatured proteins, in association with DnaK and GrpE. It is the nucleotide exchange factor for DnaK and may function as a thermosensor. Unfolded proteins bind initially to DnaJ; upon interaction with the DnaJ-bound protein, DnaK hydrolyzes its bound ATP, resulting in the formation of a stable complex. GrpE releases ADP from DnaK; ATP binding to DnaK triggers the release of the substrate protein, thus completing the reaction cycle. Several rounds of ATP-dependent interactions between DnaJ, DnaK and GrpE are required for fully efficient folding. The polypeptide is Protein GrpE (Streptococcus pneumoniae serotype 4 (strain ATCC BAA-334 / TIGR4)).